Here is a 178-residue protein sequence, read N- to C-terminus: Large ribosomal subunit protein uL6 (178 aa).

Belongs to the universal ribosomal protein uL6 family. Part of the 50S ribosomal subunit.

Its function is as follows. This protein binds to the 23S rRNA, and is important in its secondary structure. It is located near the subunit interface in the base of the L7/L12 stalk, and near the tRNA binding site of the peptidyltransferase center. This is Large ribosomal subunit protein uL6 from Listeria monocytogenes serotype 4a (strain HCC23).